The primary structure comprises 203 residues: Snake venom metalloproteinase fibrolase (203 aa).

Gln-1 is subject to Pyrrolidone carboxylic acid. One can recognise a Peptidase M12B domain in the interval 7–203 (RYVQLVIVAD…NNPQCILNKP (197 aa)). Cystine bridges form between Cys-118–Cys-198, Cys-158–Cys-182, and Cys-160–Cys-165. His-143 is a binding site for Zn(2+). Glu-144 is a catalytic residue. Zn(2+) is bound by residues His-147 and His-153.

It belongs to the venom metalloproteinase (M12B) family. P-I subfamily. As to quaternary structure, monomer. The cofactor is Zn(2+). Expressed by the venom gland.

It is found in the secreted. The enzyme catalyses Hydrolysis of 14-Ala-|-Leu-15 in insulin B chain and 413-Lys-|-Leu-414 in alpha-chain of fibrinogen.. Its activity is regulated as follows. Is inhibited by EDTA, o-phenanthroline and tetraethylenepentamine. Its function is as follows. Snake venom zinc metalloprotease that exhibits direct fibrinolytic activity. This Agkistrodon contortrix contortrix (Southern copperhead) protein is Snake venom metalloproteinase fibrolase.